Here is a 460-residue protein sequence, read N- to C-terminus: uncharacterized protein (460 aa).

This is an uncharacterized protein from Haemophilus influenzae (strain ATCC 51907 / DSM 11121 / KW20 / Rd).